A 235-amino-acid chain; its full sequence is Large ribosomal subunit protein uL1 (235 aa).

The protein belongs to the universal ribosomal protein uL1 family. Part of the 50S ribosomal subunit.

Its function is as follows. Binds directly to 23S rRNA. The L1 stalk is quite mobile in the ribosome, and is involved in E site tRNA release. Functionally, protein L1 is also a translational repressor protein, it controls the translation of the L11 operon by binding to its mRNA. This is Large ribosomal subunit protein uL1 from Prochlorococcus marinus (strain MIT 9303).